Consider the following 376-residue polypeptide: Succinyl-diaminopimelate desuccinylase (376 aa).

A Zn(2+)-binding site is contributed by histidine 66. Residue aspartate 68 is part of the active site. Aspartate 99 is a binding site for Zn(2+). Catalysis depends on glutamate 133, which acts as the Proton acceptor. Zn(2+)-binding residues include glutamate 134, glutamate 162, and histidine 348.

It belongs to the peptidase M20A family. DapE subfamily. As to quaternary structure, homodimer. It depends on Zn(2+) as a cofactor. Requires Co(2+) as cofactor.

The enzyme catalyses N-succinyl-(2S,6S)-2,6-diaminopimelate + H2O = (2S,6S)-2,6-diaminopimelate + succinate. The protein operates within amino-acid biosynthesis; L-lysine biosynthesis via DAP pathway; LL-2,6-diaminopimelate from (S)-tetrahydrodipicolinate (succinylase route): step 3/3. In terms of biological role, catalyzes the hydrolysis of N-succinyl-L,L-diaminopimelic acid (SDAP), forming succinate and LL-2,6-diaminopimelate (DAP), an intermediate involved in the bacterial biosynthesis of lysine and meso-diaminopimelic acid, an essential component of bacterial cell walls. The protein is Succinyl-diaminopimelate desuccinylase of Nitrosococcus oceani (strain ATCC 19707 / BCRC 17464 / JCM 30415 / NCIMB 11848 / C-107).